We begin with the raw amino-acid sequence, 247 residues long: Adenosylcobinamide-GDP ribazoletransferase (247 aa).

5 helical membrane passes run 34-54 (IITF…VFMV), 57-77 (AWCG…LMTG), 113-133 (GGLA…ELAL), 138-158 (ILAS…LLMY), and 194-214 (VLLL…AIFI).

The protein belongs to the CobS family. The cofactor is Mg(2+).

The protein localises to the cell inner membrane. It carries out the reaction alpha-ribazole + adenosylcob(III)inamide-GDP = adenosylcob(III)alamin + GMP + H(+). The catalysed reaction is alpha-ribazole 5'-phosphate + adenosylcob(III)inamide-GDP = adenosylcob(III)alamin 5'-phosphate + GMP + H(+). The protein operates within cofactor biosynthesis; adenosylcobalamin biosynthesis; adenosylcobalamin from cob(II)yrinate a,c-diamide: step 7/7. In terms of biological role, joins adenosylcobinamide-GDP and alpha-ribazole to generate adenosylcobalamin (Ado-cobalamin). Also synthesizes adenosylcobalamin 5'-phosphate from adenosylcobinamide-GDP and alpha-ribazole 5'-phosphate. This Shigella flexneri serotype 5b (strain 8401) protein is Adenosylcobinamide-GDP ribazoletransferase.